The chain runs to 218 residues: MEPKFWQERWARNQIGFHLPEVNPYLLRHWSHLSLADDAKVLVPLCGKSLDLMWLASHGLRVMGVELSEQAVETFFSEQSLTPHITRRGAFTVYQADLLEVWCGDFFALGAEDLADCTALYDRAALIALPPLMRAQYAEHLNTLLRPGCQGLLVTLDYDQTQKAGPPFAVTDDEVAVLFGLKWTLEVLEARDILGESWKFVQDGVTRLDERVYRLVMR.

The S-adenosyl-L-methionine site is built by Trp-10, Leu-45, Glu-66, and Arg-123.

Belongs to the class I-like SAM-binding methyltransferase superfamily. TPMT family.

The protein resides in the cytoplasm. The catalysed reaction is S-adenosyl-L-methionine + a thiopurine = S-adenosyl-L-homocysteine + a thiopurine S-methylether.. In Pseudomonas fluorescens (strain SBW25), this protein is Thiopurine S-methyltransferase.